The primary structure comprises 250 residues: Probable transcriptional regulatory protein Ctha_1786 (250 aa).

The protein belongs to the TACO1 family.

The protein localises to the cytoplasm. The chain is Probable transcriptional regulatory protein Ctha_1786 from Chloroherpeton thalassium (strain ATCC 35110 / GB-78).